The chain runs to 448 residues: 3-phosphoshikimate 1-carboxyvinyltransferase (448 aa).

3-phosphoshikimate-binding residues include lysine 38, serine 39, and arginine 43. Lysine 38 is a phosphoenolpyruvate binding site. Residues glycine 111 and arginine 140 each coordinate phosphoenolpyruvate. 3-phosphoshikimate contacts are provided by serine 185, glutamine 187, aspartate 335, and lysine 362. Phosphoenolpyruvate is bound at residue glutamine 187. Catalysis depends on aspartate 335, which acts as the Proton acceptor. The phosphoenolpyruvate site is built by arginine 366 and arginine 408.

Belongs to the EPSP synthase family. In terms of assembly, monomer.

It localises to the cytoplasm. It carries out the reaction 3-phosphoshikimate + phosphoenolpyruvate = 5-O-(1-carboxyvinyl)-3-phosphoshikimate + phosphate. It functions in the pathway metabolic intermediate biosynthesis; chorismate biosynthesis; chorismate from D-erythrose 4-phosphate and phosphoenolpyruvate: step 6/7. Its function is as follows. Catalyzes the transfer of the enolpyruvyl moiety of phosphoenolpyruvate (PEP) to the 5-hydroxyl of shikimate-3-phosphate (S3P) to produce enolpyruvyl shikimate-3-phosphate and inorganic phosphate. This Synechococcus elongatus (strain ATCC 33912 / PCC 7942 / FACHB-805) (Anacystis nidulans R2) protein is 3-phosphoshikimate 1-carboxyvinyltransferase.